A 221-amino-acid polypeptide reads, in one-letter code: 7-carboxy-7-deazaguanine synthase (221 aa).

Residues 12–14 (ING) and R27 each bind substrate. The Radical SAM core domain occupies 18–216 (KSGQLSVFIR…IQIHKIIWNP (199 aa)). [4Fe-4S] cluster is bound by residues C31, C35, and C38. T40 contacts Mg(2+). Residue T73 coordinates substrate. An S-adenosyl-L-methionine-binding site is contributed by G75.

It belongs to the radical SAM superfamily. 7-carboxy-7-deazaguanine synthase family. Homodimer. The cofactor is [4Fe-4S] cluster. S-adenosyl-L-methionine serves as cofactor. Mg(2+) is required as a cofactor.

The catalysed reaction is 6-carboxy-5,6,7,8-tetrahydropterin + H(+) = 7-carboxy-7-deazaguanine + NH4(+). It participates in purine metabolism; 7-cyano-7-deazaguanine biosynthesis. Its function is as follows. Catalyzes the complex heterocyclic radical-mediated conversion of 6-carboxy-5,6,7,8-tetrahydropterin (CPH4) to 7-carboxy-7-deazaguanine (CDG), a step common to the biosynthetic pathways of all 7-deazapurine-containing compounds. This is 7-carboxy-7-deazaguanine synthase from Clostridium acetobutylicum (strain ATCC 824 / DSM 792 / JCM 1419 / IAM 19013 / LMG 5710 / NBRC 13948 / NRRL B-527 / VKM B-1787 / 2291 / W).